Reading from the N-terminus, the 170-residue chain is MKKVFILLALKYYILNSIIRNGENLYKKIVIPTDGSDVSLEAAKHAINIAKEFDAEVYAIYVVDVSPFVGLPAEGSWELISELLKEEGQEALKKVKKMAEEWGVKIHTEMLEGVPANEIVEFAEKKKADLIVMGTTGKTGLERILLGSVAERVIKNAHCPVLVVKKPKKE.

The protein belongs to the universal stress protein A family.

This chain is Universal stress protein MJ0531, found in Methanocaldococcus jannaschii (strain ATCC 43067 / DSM 2661 / JAL-1 / JCM 10045 / NBRC 100440) (Methanococcus jannaschii).